The primary structure comprises 301 residues: Glycine--tRNA ligase alpha subunit (301 aa).

This sequence belongs to the class-II aminoacyl-tRNA synthetase family. In terms of assembly, tetramer of two alpha and two beta subunits.

The protein resides in the cytoplasm. The catalysed reaction is tRNA(Gly) + glycine + ATP = glycyl-tRNA(Gly) + AMP + diphosphate. This chain is Glycine--tRNA ligase alpha subunit, found in Shewanella frigidimarina (strain NCIMB 400).